The following is a 480-amino-acid chain: Glycogen synthase (480 aa).

Lys-15 lines the ADP-alpha-D-glucose pocket.

Belongs to the glycosyltransferase 1 family. Bacterial/plant glycogen synthase subfamily.

It catalyses the reaction [(1-&gt;4)-alpha-D-glucosyl](n) + ADP-alpha-D-glucose = [(1-&gt;4)-alpha-D-glucosyl](n+1) + ADP + H(+). Its pathway is glycan biosynthesis; glycogen biosynthesis. Functionally, synthesizes alpha-1,4-glucan chains using ADP-glucose. The protein is Glycogen synthase of Rhizobium tropici.